Here is a 339-residue protein sequence, read N- to C-terminus: 7,8-didemethyl-8-hydroxy-5-deazariboflavin synthase (339 aa).

Residues Ile-13–Pro-258 enclose the Radical SAM core domain. The [4Fe-4S] cluster site is built by Cys-27, Cys-31, and Cys-34.

It belongs to the radical SAM superfamily. CofG family. As to quaternary structure, consists of two subunits, CofG and CofH. The cofactor is [4Fe-4S] cluster.

It carries out the reaction 5-amino-5-(4-hydroxybenzyl)-6-(D-ribitylimino)-5,6-dihydrouracil + S-adenosyl-L-methionine = 7,8-didemethyl-8-hydroxy-5-deazariboflavin + 5'-deoxyadenosine + L-methionine + NH4(+) + H(+). It participates in cofactor biosynthesis; coenzyme F0 biosynthesis. In terms of biological role, catalyzes the radical-mediated synthesis of 7,8-didemethyl-8-hydroxy-5-deazariboflavin from 5-amino-5-(4-hydroxybenzyl)-6-(D-ribitylimino)-5,6-dihydrouracil. The polypeptide is 7,8-didemethyl-8-hydroxy-5-deazariboflavin synthase (Methanobrevibacter smithii (strain ATCC 35061 / DSM 861 / OCM 144 / PS)).